Here is a 341-residue protein sequence, read N- to C-terminus: Queuosine 5'-phosphate N-glycosylase/hydrolase (341 aa).

Met-1 carries the post-translational modification N-acetylmethionine. Residues His-53, Phe-237, Asp-239, Asp-314, Tyr-315, and Asp-319 each coordinate queuine. The active-site Nucleophile or transition state stabilizer is Asp-239.

This sequence belongs to the QNG1 protein family.

The catalysed reaction is queuosine 5'-phosphate + H2O = queuine + D-ribose 5-phosphate. Its function is as follows. Catalyzes the hydrolysis of queuosine 5'-phosphate, releasing the nucleobase queuine (q). Is required for salvage of queuine from exogenous queuosine (Q) that is imported and then converted to queuosine 5'-phosphate intracellularly. This chain is Queuosine 5'-phosphate N-glycosylase/hydrolase, found in Bos taurus (Bovine).